The following is a 342-amino-acid chain: Cystein proteinase inhibitor protein salarin (342 aa).

The N-terminal stretch at methionine 1–serine 19 is a signal peptide. Residue asparagine 153 is glycosylated (N-linked (GlcNAc) asparagine). A glycan (O-linked (GlcNAc) threonine) is linked at threonine 184.

In terms of processing, N-glycosylated, with sialylated biantennary complex-type glycans. Post-translationally, O-glycosylated, with sialylated oligosaccharides. Expressed in the skin, liver. intestine, spleen, pancreas and kidney.

The protein resides in the cytoplasm. It is found in the vacuole. Its function is as follows. Inhibits papain and ficin (cysteine proteinases) but not trypsin (a serine proteinase). This chain is Cystein proteinase inhibitor protein salarin (salarin), found in Salmo salar (Atlantic salmon).